Reading from the N-terminus, the 203-residue chain is Ras-related protein Rab-30 (203 aa).

GTP-binding residues include valine 20, glycine 21, lysine 22, threonine 23, cysteine 24, and threonine 41. Threonine 23 serves as a coordination point for Mg(2+). Positions 36–44 (PGQGATIGV) are switch-I. Positions 41 and 64 each coordinate Mg(2+). GTP contacts are provided by glycine 67, asparagine 122, lysine 123, aspartate 125, alanine 153, and lysine 154. Residues 67–83 (GQERFRSITQSYYRSAN) form a switch-II region. 2 S-geranylgeranyl cysteine lipidation sites follow: cysteine 199 and cysteine 200. A Cysteine methyl ester modification is found at cysteine 200. The propeptide at 201-203 (NFN) is removed in mature form.

This sequence belongs to the small GTPase superfamily. Rab family. The cofactor is Mg(2+).

It is found in the membrane. The protein localises to the golgi apparatus. Its subcellular location is the trans-Golgi network membrane. The protein resides in the cis-Golgi network membrane. It localises to the golgi apparatus membrane. It is found in the cytoplasm. The protein localises to the cytoplasmic vesicle. Its subcellular location is the autophagosome membrane. The protein resides in the autolysosome membrane. It catalyses the reaction GTP + H2O = GDP + phosphate + H(+). Regulated by guanine nucleotide exchange factors (GEFs) which promote the exchange of bound GDP for free GTP. Regulated by GTPase activating proteins (GAPs) which increase the GTP hydrolysis activity. Inhibited by GDP dissociation inhibitors (GDIs). The small GTPases Rab are key regulators of intracellular membrane trafficking, from the formation of transport vesicles to their fusion with membranes. Rabs cycle between an inactive GDP-bound form and an active GTP-bound form that is able to recruit to membranes different sets of downstream effectors directly responsible for vesicle formation, movement, tethering and fusion. RAB30 is required for maintaining the structural integrity of the Golgi apparatus, possibly by mediating interactions with cytoplasmic scaffolding proteins. Facilitates lipid homeostasis during fasting by regulating hepatic protein and lipid trafficking in a PPAR-alpha-dependent manner. Promotes autophagosome biogenesis during bacterial infection such as group A Streptococcus infection. The protein is Ras-related protein Rab-30 (RAB30) of Bos taurus (Bovine).